We begin with the raw amino-acid sequence, 256 residues long: Small ribosomal subunit protein uS2 (256 aa).

It belongs to the universal ribosomal protein uS2 family.

This chain is Small ribosomal subunit protein uS2, found in Brucella anthropi (strain ATCC 49188 / DSM 6882 / CCUG 24695 / JCM 21032 / LMG 3331 / NBRC 15819 / NCTC 12168 / Alc 37) (Ochrobactrum anthropi).